The chain runs to 398 residues: 8-amino-7-oxononanoate synthase (398 aa).

Arg-23 contacts substrate. 110–111 (GY) lines the pyridoxal 5'-phosphate pocket. Position 135 (His-135) interacts with substrate. Residues Ser-181, His-209, and Thr-238 each coordinate pyridoxal 5'-phosphate. At Lys-241 the chain carries N6-(pyridoxal phosphate)lysine. Residue Thr-355 coordinates substrate.

Belongs to the class-II pyridoxal-phosphate-dependent aminotransferase family. BioF subfamily. Homodimer. Requires pyridoxal 5'-phosphate as cofactor.

The catalysed reaction is 6-carboxyhexanoyl-[ACP] + L-alanine + H(+) = (8S)-8-amino-7-oxononanoate + holo-[ACP] + CO2. The protein operates within cofactor biosynthesis; biotin biosynthesis. Catalyzes the decarboxylative condensation of pimeloyl-[acyl-carrier protein] and L-alanine to produce 8-amino-7-oxononanoate (AON), [acyl-carrier protein], and carbon dioxide. In Cellvibrio japonicus (strain Ueda107) (Pseudomonas fluorescens subsp. cellulosa), this protein is 8-amino-7-oxononanoate synthase.